We begin with the raw amino-acid sequence, 467 residues long: MKSVLASGALTLAFSLAALAADAFQASSWDSTHIIRRDVVIVGGGAAGTYAAIRLKDHGKSVVLVERRDRLGGHAVTYKDPNTGGSVDYGVQVYDNNTVVRDFFSRLNTPLADLSFASFGKPVYADFEEGMLLNLTAGTLGQDYINELNKYPYLDNGFELPDPVPEDLLLPWVEYIGKYNIDLSTAIATLARPAVTGNLLNILAIYVFNNLNHLLLHEMSGAVVVNANRDNSQLYRNAVSELQPDLLLRSRVVAGQRRTRKRDGVRLVVDTPTGRKLIIAKQLIVGMPPILDNMRTFGLDSHEHSVLSHIYGLPYYGGVVSDTGLAPGFSFKNYAANTSYNLAEIPSVVAFNPSSVDGLFYYWYNAPQPVSQRRIETEARDAIKTLQRLTNSTTQPEPKFLAFSDFAPYQLRVSAEAIRNGFYDDMYGLQGHRNTWYTGTLFVTGSSQVWNNTEVMLPEILAAVNSS.

Positions 1-20 (MKSVLASGALTLAFSLAALA) are cleaved as a signal peptide. 5 N-linked (GlcNAc...) asparagine glycosylation sites follow: N96, N134, N337, N391, and N451.

Belongs to the beta-cyclopiazonate dehydrogenase family. Requires FAD as cofactor.

It participates in secondary metabolite biosynthesis. In terms of biological role, FAD-dependent oxidoreductase; part of the gene cluster that mediates the biosynthesis of the antibiotic 2,4-dihydroxy-3-methyl-6-(2-oxopropyl)benzaldehyde (DHMBA) and its derivatives. The direct non-reducing polyketide synthase dbaI product is 2,4-dihydroxy-3-methyl-6-(2-oxopropyl)benzaldehyde (DHMBA), produced by condensation of one acetyl-CoA starter unit with 4 malonyl-CoA units and one methylation step. The FAD-dependent monooxygenase dbaH is responsible for the synthesis of yellow pigments derived from the oxidation of DHMBA. The roles of dbaB, C, E and F have still to be determined. This chain is FAD-dependent oxidoreductase dbaF, found in Emericella nidulans (strain FGSC A4 / ATCC 38163 / CBS 112.46 / NRRL 194 / M139) (Aspergillus nidulans).